The primary structure comprises 217 residues: MPELTEIKSEAAPSTSAEAKPEDVRVEDDGSDSDSDGGMPGLEEAVAATTQLGGGATGLPIDLVSKAKQSRGEKKARKIMLKLGLKQIQGVNRVTIRKSKNILFVINNPDVYKNPHSDTYIVFGEAKIEDLSQQAQVAAAEKFKAPEAAGAADSVGATTSVAPIAEEDEEDVDDTGVDEKDIELVITQANTTRAKAIKALKNNNNDIVNAIMELTML.

The segment at 1–45 (MPELTEIKSEAAPSTSAEAKPEDVRVEDDGSDSDSDGGMPGLEEA) is disordered. The span at 19–28 (AKPEDVRVED) shows a compositional bias: basic and acidic residues. The NAC-A/B domain maps to 70-135 (SRGEKKARKI…AKIEDLSQQA (66 aa)). The interval 154–177 (SVGATTSVAPIAEEDEEDVDDTGV) is disordered. Residues 165-176 (AEEDEEDVDDTG) show a composition bias toward acidic residues. A UBA domain is found at 177-217 (VDEKDIELVITQANTTRAKAIKALKNNNNDIVNAIMELTML).

It belongs to the NAC-alpha family. Part of the nascent polypeptide-associated complex (NAC), consisting of Nac-alpha and bicaudal (bic).

Functionally, may promote appropriate targeting of ribosome-nascent polypeptide complexes. Required for correct localization of the osk/oskar protein to the posterior pole during embryonic development. The osk protein directs the recruitment of molecules responsible for posterior body patterning and germline formation in the embryo. The chain is Nascent polypeptide-associated complex subunit alpha (Nacalpha) from Drosophila melanogaster (Fruit fly).